The chain runs to 497 residues: Glutamyl-tRNA(Gln) amidotransferase subunit A (497 aa).

Residues Lys-91 and Ser-166 each act as charge relay system in the active site. The disordered stretch occupies residues 143-171 (SSTENSAYGPTHNPWDLERTAGGSGGGSS). Catalysis depends on Ser-190, which acts as the Acyl-ester intermediate.

The protein belongs to the amidase family. GatA subfamily. As to quaternary structure, heterotrimer of A, B and C subunits.

It catalyses the reaction L-glutamyl-tRNA(Gln) + L-glutamine + ATP + H2O = L-glutaminyl-tRNA(Gln) + L-glutamate + ADP + phosphate + H(+). Its function is as follows. Allows the formation of correctly charged Gln-tRNA(Gln) through the transamidation of misacylated Glu-tRNA(Gln) in organisms which lack glutaminyl-tRNA synthetase. The reaction takes place in the presence of glutamine and ATP through an activated gamma-phospho-Glu-tRNA(Gln). The chain is Glutamyl-tRNA(Gln) amidotransferase subunit A from Corynebacterium glutamicum (strain ATCC 13032 / DSM 20300 / JCM 1318 / BCRC 11384 / CCUG 27702 / LMG 3730 / NBRC 12168 / NCIMB 10025 / NRRL B-2784 / 534).